The primary structure comprises 360 residues: Phosphoserine aminotransferase (360 aa).

R42 is a binding site for L-glutamate. Residues W102, T152, D171, and Q194 each coordinate pyridoxal 5'-phosphate. K195 bears the N6-(pyridoxal phosphate)lysine mark. A pyridoxal 5'-phosphate-binding site is contributed by 237–238 (NT).

It belongs to the class-V pyridoxal-phosphate-dependent aminotransferase family. SerC subfamily. As to quaternary structure, homodimer. Pyridoxal 5'-phosphate serves as cofactor.

It localises to the cytoplasm. It carries out the reaction O-phospho-L-serine + 2-oxoglutarate = 3-phosphooxypyruvate + L-glutamate. It catalyses the reaction 4-(phosphooxy)-L-threonine + 2-oxoglutarate = (R)-3-hydroxy-2-oxo-4-phosphooxybutanoate + L-glutamate. The protein operates within amino-acid biosynthesis; L-serine biosynthesis; L-serine from 3-phospho-D-glycerate: step 2/3. Its pathway is cofactor biosynthesis; pyridoxine 5'-phosphate biosynthesis; pyridoxine 5'-phosphate from D-erythrose 4-phosphate: step 3/5. Its function is as follows. Catalyzes the reversible conversion of 3-phosphohydroxypyruvate to phosphoserine and of 3-hydroxy-2-oxo-4-phosphonooxybutanoate to phosphohydroxythreonine. The chain is Phosphoserine aminotransferase from Coxiella burnetii (strain CbuG_Q212) (Coxiella burnetii (strain Q212)).